Reading from the N-terminus, the 354-residue chain is UDP-3-O-acylglucosamine N-acyltransferase (354 aa).

Residue His-247 is the Proton acceptor of the active site.

It belongs to the transferase hexapeptide repeat family. LpxD subfamily. As to quaternary structure, homotrimer.

The catalysed reaction is a UDP-3-O-[(3R)-3-hydroxyacyl]-alpha-D-glucosamine + a (3R)-hydroxyacyl-[ACP] = a UDP-2-N,3-O-bis[(3R)-3-hydroxyacyl]-alpha-D-glucosamine + holo-[ACP] + H(+). It participates in bacterial outer membrane biogenesis; LPS lipid A biosynthesis. Catalyzes the N-acylation of UDP-3-O-acylglucosamine using 3-hydroxyacyl-ACP as the acyl donor. Is involved in the biosynthesis of lipid A, a phosphorylated glycolipid that anchors the lipopolysaccharide to the outer membrane of the cell. The polypeptide is UDP-3-O-acylglucosamine N-acyltransferase (Chlamydia trachomatis serovar L2 (strain ATCC VR-902B / DSM 19102 / 434/Bu)).